The primary structure comprises 296 residues: Ribose import binding protein RbsB (296 aa).

A signal peptide spans 1 to 25 (MNMKKLATLVSAVALSATVSANAMA).

It belongs to the bacterial solute-binding protein 2 family. The complex is composed of an ATP-binding protein (RbsA), two transmembrane proteins (RbsC) and a solute-binding protein (RbsB).

Its subcellular location is the periplasm. Functionally, part of the ABC transporter complex RbsABC involved in ribose import. Binds ribose. Also serves as the primary chemoreceptor for chemotaxis. The polypeptide is Ribose import binding protein RbsB (Escherichia coli (strain K12)).